The primary structure comprises 384 residues: PqqA peptide cyclase (384 aa).

The region spanning 15 to 231 (PGPPLWLLAE…NQWRDKLAAE (217 aa)) is the Radical SAM core domain. The [4Fe-4S] cluster site is built by Cys29, Cys33, and Cys36.

Belongs to the radical SAM superfamily. PqqE family. Interacts with PqqD. The interaction is necessary for activity of PqqE. Requires [4Fe-4S] cluster as cofactor.

The catalysed reaction is [PQQ precursor protein] + S-adenosyl-L-methionine = E-Y cross-linked-[PQQ precursor protein] + 5'-deoxyadenosine + L-methionine + H(+). Its pathway is cofactor biosynthesis; pyrroloquinoline quinone biosynthesis. Catalyzes the cross-linking of a glutamate residue and a tyrosine residue in the PqqA protein as part of the biosynthesis of pyrroloquinoline quinone (PQQ). The protein is PqqA peptide cyclase of Ectopseudomonas mendocina (strain ymp) (Pseudomonas mendocina).